We begin with the raw amino-acid sequence, 177 residues long: Large ribosomal subunit protein uL6 (177 aa).

Belongs to the universal ribosomal protein uL6 family. Part of the 50S ribosomal subunit.

In terms of biological role, this protein binds to the 23S rRNA, and is important in its secondary structure. It is located near the subunit interface in the base of the L7/L12 stalk, and near the tRNA binding site of the peptidyltransferase center. The chain is Large ribosomal subunit protein uL6 from Neisseria meningitidis serogroup B (strain ATCC BAA-335 / MC58).